The primary structure comprises 495 residues: Glutamate--tRNA ligase (495 aa).

The 'HIGH' region signature appears at 13–23 (PSPTGTPHVGL). A 'KMSKS' region motif is present at residues 257–261 (KLSKR). Lysine 260 is a binding site for ATP.

It belongs to the class-I aminoacyl-tRNA synthetase family. Glutamate--tRNA ligase type 1 subfamily. Monomer.

Its subcellular location is the cytoplasm. It carries out the reaction tRNA(Glu) + L-glutamate + ATP = L-glutamyl-tRNA(Glu) + AMP + diphosphate. Catalyzes the attachment of glutamate to tRNA(Glu) in a two-step reaction: glutamate is first activated by ATP to form Glu-AMP and then transferred to the acceptor end of tRNA(Glu). The sequence is that of Glutamate--tRNA ligase from Mycolicibacterium vanbaalenii (strain DSM 7251 / JCM 13017 / BCRC 16820 / KCTC 9966 / NRRL B-24157 / PYR-1) (Mycobacterium vanbaalenii).